The primary structure comprises 215 residues: Leucyl/phenylalanyl-tRNA--protein transferase (215 aa).

It belongs to the L/F-transferase family.

The protein resides in the cytoplasm. The catalysed reaction is N-terminal L-lysyl-[protein] + L-leucyl-tRNA(Leu) = N-terminal L-leucyl-L-lysyl-[protein] + tRNA(Leu) + H(+). The enzyme catalyses N-terminal L-arginyl-[protein] + L-leucyl-tRNA(Leu) = N-terminal L-leucyl-L-arginyl-[protein] + tRNA(Leu) + H(+). It carries out the reaction L-phenylalanyl-tRNA(Phe) + an N-terminal L-alpha-aminoacyl-[protein] = an N-terminal L-phenylalanyl-L-alpha-aminoacyl-[protein] + tRNA(Phe). Functions in the N-end rule pathway of protein degradation where it conjugates Leu, Phe and, less efficiently, Met from aminoacyl-tRNAs to the N-termini of proteins containing an N-terminal arginine or lysine. The chain is Leucyl/phenylalanyl-tRNA--protein transferase from Campylobacter jejuni subsp. jejuni serotype O:2 (strain ATCC 700819 / NCTC 11168).